A 3718-amino-acid polypeptide reads, in one-letter code: Laminin subunit alpha-5 (3718 aa).

The N-terminal stretch at M1–A40 is a signal peptide. The 259-residue stretch at D46–R304 folds into the Laminin N-terminal domain. N100, N148, and N248 each carry an N-linked (GlcNAc...) asparagine glycan. 12 disulfides stabilise this stretch: C305/C314, C307/C327, C329/C338, C341/C361, C364/C373, C366/C398, C401/C410, C413/C431, C434/C445, C436/C452, C454/C463, and C466/C476. 3 Laminin EGF-like domains span residues C305–S363, C364–P433, and C434–L479. N-linked (GlcNAc...) asparagine glycosylation occurs at N383. N-linked (GlcNAc...) asparagine glycosylation occurs at N457. N-linked (GlcNAc...) asparagine glycosylation is present at N485. Cystine bridges form between C500–C512, C502–C521, C523–C532, C535–C544, C547–C559, C549–C566, C568–C577, C580–C590, C593–C605, C595–C611, C613–C622, C625–C635, C638–C650, C640–C656, C658–C667, C670–C680, C683–C695, C685–C702, C704–C713, C716–C731, C752–C761, C764–C779, C782–C796, C784–C802, C804–C813, C816–C831, C834–C846, C836–C853, and C855–C864. Laminin EGF-like domains are found at residues C500–P546, C547–L592, C593–A637, C638–P682, C683–A728, G729–R781, and C782–S833. One can recognise a Laminin EGF-like 11; truncated domain in the interval C834 to C855. The segment at R856–P1442 is domain IV 1 (domain IV B). Residues N905, N926, and N964 are each glycosylated (N-linked (GlcNAc...) asparagine). Residues L1253–L1284 form a disordered region. Over residues G1262 to A1275 the composition is skewed to pro residues. Residue N1335 is glycosylated (N-linked (GlcNAc...) asparagine). Cystine bridges form between C1443–C1455, C1445–C1462, C1464–C1473, C1476–C1486, C1489–C1496, C1491–C1503, C1505–C1514, C1517–C1530, C1533–C1548, C1535–C1555, C1557–C1566, C1569–C1579, C1582–C1594, C1584–C1601, C1603–C1612, and C1615–C1630. 4 Laminin EGF-like domains span residues C1443–P1488, C1489–E1532, C1533–P1581, and C1582–R1632. The N-linked (GlcNAc...) asparagine glycan is linked to N1534. The 10-residue stretch at C1633–C1642 folds into the Laminin EGF-like 16; first part domain. The Laminin IV type A domain maps to N1646–L1831. 2 short sequence motifs (cell attachment site) span residues R1723–D1725 and R1839–D1841. In terms of domain architecture, Laminin EGF-like 16; second part spans C1832–P1864. Intrachain disulfides connect C1865-C1874, C1867-C1881, C1884-C1893, C1896-C1912, C1915-C1930, C1917-C1939, C1941-C1950, C1953-C1968, C1971-C1986, C1973-C1993, C1996-C2005, C2008-C2022, C2025-C2035, C2027-C2042, C2044-C2053, C2056-C2069, C2072-C2083, C2074-C2090, C2092-C2101, C2104-C2116, C2119-C2126, C2121-C2133, C2135-C2144, and C2147-C2166. Laminin EGF-like domains lie at C1865 to S1914, C1915 to P1970, C1971 to R2024, C2025 to P2071, C2072 to R2118, and C2119 to V2168. Residue N2021 is glycosylated (N-linked (GlcNAc...) asparagine). Residues C2169–V2735 are domain II and I. N-linked (GlcNAc...) asparagine glycans are attached at residues N2198, N2211, N2365, N2395, N2425, N2503, and N2570. Coiled-coil stretches lie at residues A2205 to T2257 and T2330 to D2464. Coiled coils occupy residues A2604–A2621 and A2639–R2705. N2709 is a glycosylation site (N-linked (GlcNAc...) asparagine). Laminin G-like domains follow at residues K2736–C2933, G2947–C3119, T3128–C3296, A3337–C3511, and D3518–C3689. 2 cysteine pairs are disulfide-bonded: C2903-C2933 and C3094-C3119. N3111, N3213, N3261, and N3291 each carry an N-linked (GlcNAc...) asparagine glycan. Intrachain disulfides connect C3265/C3296 and C3488/C3511. N-linked (GlcNAc...) asparagine glycans are attached at residues N3623 and N3673. Residues C3661 and C3689 are joined by a disulfide bond.

In terms of assembly, laminin is a complex glycoprotein, consisting of three different polypeptide chains (alpha, beta, gamma), which are bound to each other by disulfide bonds into a cross-shaped molecule comprising one long and three short arms with globules at each end. Alpha-5 is a subunit of laminin-10 (laminin-511), laminin-11 (laminin-521) and laminin-15 (laminin-523). In terms of tissue distribution, in adult, high levels in heart, lung, and kidney; lower in brain, muscle and testis; very low in liver, gut and skin.

Its subcellular location is the secreted. It localises to the extracellular space. The protein localises to the extracellular matrix. It is found in the basement membrane. Binding to cells via a high affinity receptor, laminin is thought to mediate the attachment, migration and organization of cells into tissues during embryonic development by interacting with other extracellular matrix components. Alpha-5 may be the major laminin alpha chain of adult epithelial and/or endothelial basal laminae. Plays a role in the regulation of skeletogenesis, through a mechanism that involves integrin-mediated signaling and PTK2B/PYK2. This Mus musculus (Mouse) protein is Laminin subunit alpha-5 (Lama5).